Here is a 432-residue protein sequence, read N- to C-terminus: 3-phosphoshikimate 1-carboxyvinyltransferase (432 aa).

3-phosphoshikimate contacts are provided by Lys-22, Ser-23, and Arg-27. Lys-22 lines the phosphoenolpyruvate pocket. Phosphoenolpyruvate-binding residues include Gly-96 and Arg-127. 3-phosphoshikimate-binding residues include Ser-173, Ser-174, Gln-175, Ser-201, Asp-316, Asn-339, and Lys-343. Gln-175 lines the phosphoenolpyruvate pocket. Catalysis depends on Asp-316, which acts as the Proton acceptor. 3 residues coordinate phosphoenolpyruvate: Arg-347, Arg-391, and Lys-416.

It belongs to the EPSP synthase family. In terms of assembly, monomer.

It is found in the cytoplasm. The enzyme catalyses 3-phosphoshikimate + phosphoenolpyruvate = 5-O-(1-carboxyvinyl)-3-phosphoshikimate + phosphate. The protein operates within metabolic intermediate biosynthesis; chorismate biosynthesis; chorismate from D-erythrose 4-phosphate and phosphoenolpyruvate: step 6/7. Functionally, catalyzes the transfer of the enolpyruvyl moiety of phosphoenolpyruvate (PEP) to the 5-hydroxyl of shikimate-3-phosphate (S3P) to produce enolpyruvyl shikimate-3-phosphate and inorganic phosphate. In Histophilus somni (Haemophilus somnus), this protein is 3-phosphoshikimate 1-carboxyvinyltransferase.